Reading from the N-terminus, the 343-residue chain is Protein RecA (343 aa).

Residue 66-73 participates in ATP binding; it reads GPESSGKT.

The protein belongs to the RecA family.

The protein resides in the cytoplasm. Can catalyze the hydrolysis of ATP in the presence of single-stranded DNA, the ATP-dependent uptake of single-stranded DNA by duplex DNA, and the ATP-dependent hybridization of homologous single-stranded DNAs. It interacts with LexA causing its activation and leading to its autocatalytic cleavage. This chain is Protein RecA, found in Rickettsia bellii (strain RML369-C).